A 334-amino-acid chain; its full sequence is N-acetyl-gamma-glutamyl-phosphate reductase (334 aa).

Residue Cys-149 is part of the active site.

This sequence belongs to the NAGSA dehydrogenase family. Type 1 subfamily.

It localises to the cytoplasm. It catalyses the reaction N-acetyl-L-glutamate 5-semialdehyde + phosphate + NADP(+) = N-acetyl-L-glutamyl 5-phosphate + NADPH + H(+). It functions in the pathway amino-acid biosynthesis; L-arginine biosynthesis; N(2)-acetyl-L-ornithine from L-glutamate: step 3/4. Its function is as follows. Catalyzes the NADPH-dependent reduction of N-acetyl-5-glutamyl phosphate to yield N-acetyl-L-glutamate 5-semialdehyde. This chain is N-acetyl-gamma-glutamyl-phosphate reductase, found in Sulfurimonas denitrificans (strain ATCC 33889 / DSM 1251) (Thiomicrospira denitrificans (strain ATCC 33889 / DSM 1251)).